A 235-amino-acid polypeptide reads, in one-letter code: Aspartate/glutamate leucyltransferase (235 aa).

The protein belongs to the R-transferase family. Bpt subfamily.

The protein localises to the cytoplasm. The enzyme catalyses N-terminal L-glutamyl-[protein] + L-leucyl-tRNA(Leu) = N-terminal L-leucyl-L-glutamyl-[protein] + tRNA(Leu) + H(+). It carries out the reaction N-terminal L-aspartyl-[protein] + L-leucyl-tRNA(Leu) = N-terminal L-leucyl-L-aspartyl-[protein] + tRNA(Leu) + H(+). In terms of biological role, functions in the N-end rule pathway of protein degradation where it conjugates Leu from its aminoacyl-tRNA to the N-termini of proteins containing an N-terminal aspartate or glutamate. The sequence is that of Aspartate/glutamate leucyltransferase from Pseudomonas savastanoi pv. phaseolicola (strain 1448A / Race 6) (Pseudomonas syringae pv. phaseolicola (strain 1448A / Race 6)).